We begin with the raw amino-acid sequence, 363 residues long: S-adenosylmethionine:tRNA ribosyltransferase-isomerase (363 aa).

This sequence belongs to the QueA family. As to quaternary structure, monomer.

It localises to the cytoplasm. The catalysed reaction is 7-aminomethyl-7-carbaguanosine(34) in tRNA + S-adenosyl-L-methionine = epoxyqueuosine(34) in tRNA + adenine + L-methionine + 2 H(+). It functions in the pathway tRNA modification; tRNA-queuosine biosynthesis. Its function is as follows. Transfers and isomerizes the ribose moiety from AdoMet to the 7-aminomethyl group of 7-deazaguanine (preQ1-tRNA) to give epoxyqueuosine (oQ-tRNA). The chain is S-adenosylmethionine:tRNA ribosyltransferase-isomerase from Haemophilus influenzae (strain PittEE).